The sequence spans 317 residues: Ribosomal protein L11 methyltransferase (317 aa).

S-adenosyl-L-methionine-binding residues include Thr-158, Gly-179, Asp-201, and Asn-244.

Belongs to the methyltransferase superfamily. PrmA family.

It localises to the cytoplasm. It catalyses the reaction L-lysyl-[protein] + 3 S-adenosyl-L-methionine = N(6),N(6),N(6)-trimethyl-L-lysyl-[protein] + 3 S-adenosyl-L-homocysteine + 3 H(+). Methylates ribosomal protein L11. The chain is Ribosomal protein L11 methyltransferase from Streptococcus equi subsp. zooepidemicus (strain H70).